The following is a 337-amino-acid chain: Bifunctional methylenetetrahydrofolate dehydrogenase/cyclohydrolase, mitochondrial (337 aa).

A mitochondrion-targeting transit peptide spans 1-30 (MATALCPLRALGQTAFRPRTRRLHLSAPRA). Substrate contacts are provided by residues 79 to 83 (YVLNK) and 126 to 128 (VQL). Residues 195-197 (GRS) and Arg228 each bind NAD(+). Position 304–308 (304–308 (PGGVG)) interacts with substrate.

It belongs to the tetrahydrofolate dehydrogenase/cyclohydrolase family. Mg(2+) is required as a cofactor.

It is found in the mitochondrion. It catalyses the reaction (6R)-5,10-methylene-5,6,7,8-tetrahydrofolate + NAD(+) = (6R)-5,10-methenyltetrahydrofolate + NADH. It carries out the reaction (6R)-5,10-methenyltetrahydrofolate + H2O = (6R)-10-formyltetrahydrofolate + H(+). Although its dehydrogenase activity is NAD-specific, it can also utilize NADP at a reduced efficiency. The polypeptide is Bifunctional methylenetetrahydrofolate dehydrogenase/cyclohydrolase, mitochondrial (MTHFD2) (Gallus gallus (Chicken)).